A 457-amino-acid chain; its full sequence is Succinate-semialdehyde dehydrogenase [NADP(+)] 1 (457 aa).

Gly209 to Gly214 contributes to the NADP(+) binding site. Active-site residues include Glu231 and Cys265.

It belongs to the aldehyde dehydrogenase family.

The enzyme catalyses succinate semialdehyde + NAD(+) + H2O = succinate + NADH + 2 H(+). The catalysed reaction is succinate semialdehyde + NADP(+) + H2O = succinate + NADPH + 2 H(+). Catalyzes the NADP(+)-dependent oxidation of succinate semialdehyde to succinate. It is believed to be the main source of succinate semialdehyde dehydrogenase activity in Mycobacterium. The polypeptide is Succinate-semialdehyde dehydrogenase [NADP(+)] 1 (gabD1) (Mycobacterium bovis (strain ATCC BAA-935 / AF2122/97)).